Consider the following 155-residue polypeptide: Putative pre-16S rRNA nuclease (155 aa).

It belongs to the YqgF nuclease family.

The protein localises to the cytoplasm. Its function is as follows. Could be a nuclease involved in processing of the 5'-end of pre-16S rRNA. This is Putative pre-16S rRNA nuclease from Wolbachia sp. subsp. Drosophila simulans (strain wRi).